The sequence spans 589 residues: Multidrug transporter FLR2 (589 aa).

Residues Lys-50 to Glu-116 form a disordered region. The segment covering Asp-56–Asp-73 has biased composition (low complexity). Asn-57 carries an N-linked (GlcNAc...) asparagine glycan. The span at Ser-107–Glu-116 shows a compositional bias: basic and acidic residues. A glycan (N-linked (GlcNAc...) asparagine) is linked at Asn-136. 12 helical membrane passes run Thr-143–Tyr-163, Val-179–Phe-199, Met-211–Val-231, Ile-234–Thr-254, Trp-275–Val-295, Trp-301–Phe-321, Pro-378–Phe-398, Gly-417–Phe-437, Leu-455–Gly-475, Ile-480–Phe-500, Ala-516–Phe-536, and Val-551–Val-571.

Belongs to the major facilitator superfamily.

The protein resides in the cell membrane. Its function is as follows. Multidrug transporter that confers resistance to 5-flucytosine (5-FC) and clotrimazole. Further confers azole drug resistance. Plays direct roles in extrusion of 5-flucytosine and clotrimazole. In Candida glabrata (strain ATCC 2001 / BCRC 20586 / JCM 3761 / NBRC 0622 / NRRL Y-65 / CBS 138) (Yeast), this protein is Multidrug transporter FLR2.